The primary structure comprises 377 residues: UDP-N-acetylglucosamine--N-acetylmuramyl-(pentapeptide) pyrophosphoryl-undecaprenol N-acetylglucosamine transferase (377 aa).

Residues 29–31 (TAG), asparagine 142, arginine 179, serine 213, and glutamine 308 each bind UDP-N-acetyl-alpha-D-glucosamine.

It belongs to the glycosyltransferase 28 family. MurG subfamily.

The protein resides in the cell membrane. The enzyme catalyses di-trans,octa-cis-undecaprenyl diphospho-N-acetyl-alpha-D-muramoyl-L-alanyl-D-glutamyl-meso-2,6-diaminopimeloyl-D-alanyl-D-alanine + UDP-N-acetyl-alpha-D-glucosamine = di-trans,octa-cis-undecaprenyl diphospho-[N-acetyl-alpha-D-glucosaminyl-(1-&gt;4)]-N-acetyl-alpha-D-muramoyl-L-alanyl-D-glutamyl-meso-2,6-diaminopimeloyl-D-alanyl-D-alanine + UDP + H(+). The protein operates within cell wall biogenesis; peptidoglycan biosynthesis. Its function is as follows. Cell wall formation. Catalyzes the transfer of a GlcNAc subunit on undecaprenyl-pyrophosphoryl-MurNAc-pentapeptide (lipid intermediate I) to form undecaprenyl-pyrophosphoryl-MurNAc-(pentapeptide)GlcNAc (lipid intermediate II). This chain is UDP-N-acetylglucosamine--N-acetylmuramyl-(pentapeptide) pyrophosphoryl-undecaprenol N-acetylglucosamine transferase, found in Saccharopolyspora erythraea (strain ATCC 11635 / DSM 40517 / JCM 4748 / NBRC 13426 / NCIMB 8594 / NRRL 2338).